A 440-amino-acid chain; its full sequence is Cell division protein FtsA (440 aa).

It belongs to the FtsA/MreB family. As to quaternary structure, self-interacts. Interacts with FtsZ.

It is found in the cell membrane. Functionally, cell division protein that is involved in the assembly of the Z ring. May serve as a membrane anchor for the Z ring. The chain is Cell division protein FtsA from Enterococcus faecalis (strain ATCC 700802 / V583).